A 35-amino-acid polypeptide reads, in one-letter code: Photosystem II reaction center protein M (35 aa).

A helical transmembrane segment spans residues 5–25 (ILAFIATALFILVPTAFLLII).

The protein belongs to the PsbM family. PSII is composed of 1 copy each of membrane proteins PsbA, PsbB, PsbC, PsbD, PsbE, PsbF, PsbH, PsbI, PsbJ, PsbK, PsbL, PsbM, PsbT, PsbX, PsbY, PsbZ, Psb30/Ycf12, at least 3 peripheral proteins of the oxygen-evolving complex and a large number of cofactors. It forms dimeric complexes.

It is found in the plastid. Its subcellular location is the chloroplast thylakoid membrane. In terms of biological role, one of the components of the core complex of photosystem II (PSII). PSII is a light-driven water:plastoquinone oxidoreductase that uses light energy to abstract electrons from H(2)O, generating O(2) and a proton gradient subsequently used for ATP formation. It consists of a core antenna complex that captures photons, and an electron transfer chain that converts photonic excitation into a charge separation. This subunit is found at the monomer-monomer interface. The polypeptide is Photosystem II reaction center protein M (Panax quinquefolius (American ginseng)).